Consider the following 292-residue polypeptide: Homoserine kinase (292 aa).

84-94 (PLARGMGSSSA) provides a ligand contact to ATP.

The protein belongs to the GHMP kinase family. Homoserine kinase subfamily.

Its subcellular location is the cytoplasm. The enzyme catalyses L-homoserine + ATP = O-phospho-L-homoserine + ADP + H(+). Its pathway is amino-acid biosynthesis; L-threonine biosynthesis; L-threonine from L-aspartate: step 4/5. In terms of biological role, catalyzes the ATP-dependent phosphorylation of L-homoserine to L-homoserine phosphate. The protein is Homoserine kinase of Thermus thermophilus (strain ATCC BAA-163 / DSM 7039 / HB27).